Reading from the N-terminus, the 397-residue chain is Elongation factor Tu (397 aa).

The 198-residue stretch at 10-207 (KPHVNIGTIG…ACDSYIPEPQ (198 aa)) folds into the tr-type G domain. Residues 19–26 (GHIDHGKT) form a G1 region. 19–26 (GHIDHGKT) is a binding site for GTP. Residue Thr26 participates in Mg(2+) binding. The segment at 60-64 (GITIA) is G2. The tract at residues 81–84 (DCPG) is G3. GTP contacts are provided by residues 81-85 (DCPGH) and 136-139 (NKCD). Positions 136–139 (NKCD) are G4. The interval 174 to 176 (SAL) is G5.

Belongs to the TRAFAC class translation factor GTPase superfamily. Classic translation factor GTPase family. EF-Tu/EF-1A subfamily. Monomer.

The protein localises to the cytoplasm. It carries out the reaction GTP + H2O = GDP + phosphate + H(+). Functionally, GTP hydrolase that promotes the GTP-dependent binding of aminoacyl-tRNA to the A-site of ribosomes during protein biosynthesis. The chain is Elongation factor Tu from Nitratidesulfovibrio vulgaris (strain ATCC 29579 / DSM 644 / CCUG 34227 / NCIMB 8303 / VKM B-1760 / Hildenborough) (Desulfovibrio vulgaris).